A 333-amino-acid polypeptide reads, in one-letter code: Low specificity L-threonine aldolase (333 aa).

Position 197 is an N6-(pyridoxal phosphate)lysine (K197).

This sequence belongs to the threonine aldolase family. Homotetramer. Pyridoxal 5'-phosphate is required as a cofactor.

The catalysed reaction is L-threonine = acetaldehyde + glycine. It carries out the reaction L-allo-threonine = acetaldehyde + glycine. Functionally, catalyzes the cleavage of L-allo-threonine and L-threonine to glycine and acetaldehyde. L-threo-phenylserine and L-erythro-phenylserine are also good substrates. The polypeptide is Low specificity L-threonine aldolase (ltaE) (Escherichia coli (strain K12)).